Consider the following 61-residue polypeptide: Small ribosomal subunit protein uS14 (61 aa).

4 residues coordinate Zn(2+): Cys-24, Cys-27, Cys-40, and Cys-43.

Belongs to the universal ribosomal protein uS14 family. Zinc-binding uS14 subfamily. As to quaternary structure, part of the 30S ribosomal subunit. Contacts proteins S3 and S10. Zn(2+) serves as cofactor.

Binds 16S rRNA, required for the assembly of 30S particles and may also be responsible for determining the conformation of the 16S rRNA at the A site. This chain is Small ribosomal subunit protein uS14, found in Elusimicrobium minutum (strain Pei191).